We begin with the raw amino-acid sequence, 85 residues long: uncharacterized protein (85 aa).

A coiled-coil region spans residues 17 to 53; that stretch reads KKRYEMLVQELLKEDDEEREKILAEELELLLDFLKKA.

This is an uncharacterized protein from Archaeoglobus fulgidus (strain ATCC 49558 / DSM 4304 / JCM 9628 / NBRC 100126 / VC-16).